The primary structure comprises 105 residues: Thioredoxin (105 aa).

The region spanning 2 to 105 (VKQIESKYAF…KLEATINELI (104 aa)) is the Thioredoxin domain. K3 bears the N6-acetyllysine mark. K8 bears the N6-succinyllysine mark. Catalysis depends on nucleophile residues C32 and C35. Residues C32 and C35 are joined by a disulfide bond. N6-acetyllysine is present on K39. S-nitrosocysteine is present on residues C62 and C69. The residue at position 73 (C73) is an S-nitrosocysteine; alternate. Residue K94 is modified to N6-acetyllysine; alternate. K94 is subject to N6-succinyllysine; alternate.

This sequence belongs to the thioredoxin family. As to quaternary structure, homodimer; disulfide-linked. Interacts with TXNIP through the redox-active site. Interacts with MAP3K5 and CASP3. Interacts with APEX1; the interaction stimulates the FOS/JUN AP-1 DNA-binding activity in a redox-dependent manner. In terms of processing, in the fully reduced protein, both Cys-69 and Cys-73 are nitrosylated in response to nitric oxide (NO). When two disulfide bonds are present in the protein, only Cys-73 is nitrosylated. Cys-73 can serve as donor for nitrosylation of target proteins. In terms of tissue distribution, erythrocytes.

It localises to the nucleus. Its subcellular location is the cytoplasm. It is found in the secreted. Participates in various redox reactions through the reversible oxidation of its active center dithiol to a disulfide and catalyzes dithiol-disulfide exchange reactions. Plays a role in the reversible S-nitrosylation of cysteine residues in target proteins, and thereby contributes to the response to intracellular nitric oxide. Nitrosylates the active site Cys of CASP3 in response to nitric oxide (NO), and thereby inhibits caspase-3 activity. Induces the FOS/JUN AP-1 DNA binding activity in ionizing radiation (IR) cells through its oxidation/reduction status and stimulates AP-1 transcriptional activity. The protein is Thioredoxin (TXN) of Sus scrofa (Pig).